Here is an 837-residue protein sequence, read N- to C-terminus: Anaphase-promoting complex subunit 4 (837 aa).

Low complexity-rich tracts occupy residues 59–81 and 547–581; these read NDNN…NDNN and SSSS…NNNN. Disordered regions lie at residues 59–89 and 547–588; these read NDNN…KSNK and SSSS…QSGN.

This sequence belongs to the APC4 family. As to quaternary structure, the APC/C is composed of at least 13 subunits that stay tightly associated throughout the cell cycle: anapc1, anapc2, anapc3, anapc4, anapc5, anapc6, anapc7, anapc8, anapc10, anapc11, cdc20, cdc26 and cdh1.

Its subcellular location is the nucleus. Its pathway is protein modification; protein ubiquitination. Component of the anaphase promoting complex/cyclosome (APC/C), a cell cycle-regulated E3 ubiquitin-protein ligase complex that controls progression through mitosis and the G1 phase of the cell cycle. This is Anaphase-promoting complex subunit 4 (anapc4) from Dictyostelium discoideum (Social amoeba).